Consider the following 282-residue polypeptide: MLYQAASEAAQKRWTTSDFDIGKPLGRGKFGHVYLAREKRSDHIVALKVLFKAQLQQSQVEHQLRREVEIQSHLRHPNILRLYGYFYDQKRVYLILEYAVRGELYKELQKCKYFSERRAATYVASLARALIYCHGKHVIHRDIKPENLLIGAQGELKIADFGWSVHTFNRRRTMCGTLDYLPPEMVESVEHDASVDIWSLGILCYEFLYGVPPFEAREHSETYKRIVQVDLKFPPKPIVSSSAKDLISQMLVKESTQRLALHKLLEHPWIVQNADPSGLYRG.

One can recognise a Protein kinase domain in the interval 19 to 270 (FDIGKPLGRG…LHKLLEHPWI (252 aa)). Residues 25–33 (LGRGKFGHV) and lysine 48 each bind ATP. The Proton acceptor role is filled by aspartate 142. The residue at position 164 (serine 164) is a Phosphoserine. Threonine 173 is modified (phosphothreonine).

This sequence belongs to the protein kinase superfamily. Ser/Thr protein kinase family. Aurora subfamily. Phosphorylation at Thr-173 may regulate activity and degradation of AUR2 in a cell cycle dependent manner. As to expression, abundant in roots, flowers and flower buds, low or absent in expanded leaves, stems and siliques.

It localises to the nucleus membrane. The protein resides in the cytoplasm. Its subcellular location is the cytoskeleton. It is found in the spindle. The protein localises to the spindle pole. The catalysed reaction is L-seryl-[protein] + ATP = O-phospho-L-seryl-[protein] + ADP + H(+). It carries out the reaction L-threonyl-[protein] + ATP = O-phospho-L-threonyl-[protein] + ADP + H(+). Functionally, phosphorylates specifically 'Ser-10' of histone H3 in vitro. Associates with cytoskeletal structures that are necessary for cytokinesis and with the microtubule spindle. Might colocalize with gamma-tubulin and function in microtubule organizing centers (MTOCs). The sequence is that of Serine/threonine-protein kinase Aurora-2 (AUR2) from Arabidopsis thaliana (Mouse-ear cress).